A 320-amino-acid chain; its full sequence is ATP-dependent 6-phosphofructokinase (320 aa).

Position 12 (Gly12) interacts with ATP. ADP is bound by residues Arg22–Arg26 and Arg55–Asp60. ATP contacts are provided by residues Arg73–Phe74 and Gly103–Ser106. Asp104 is a Mg(2+) binding site. Substrate is bound at residue Thr126–Asp128. Asp128 serves as the catalytic Proton acceptor. Residue Arg155 participates in ADP binding. Residues Arg163 and Met170–Arg172 contribute to the substrate site. ADP is bound by residues Gly186 to Glu188, Lys212, and Lys214 to His216. Residues Glu223, Arg244, and His250 to Arg253 each bind substrate.

It belongs to the phosphofructokinase type A (PFKA) family. ATP-dependent PFK group I subfamily. Prokaryotic clade 'B1' sub-subfamily. Homotetramer. Requires Mg(2+) as cofactor.

The protein localises to the cytoplasm. It carries out the reaction beta-D-fructose 6-phosphate + ATP = beta-D-fructose 1,6-bisphosphate + ADP + H(+). It participates in carbohydrate degradation; glycolysis; D-glyceraldehyde 3-phosphate and glycerone phosphate from D-glucose: step 3/4. Allosterically activated by ADP and other diphosphonucleosides, and allosterically inhibited by phosphoenolpyruvate. Catalyzes the phosphorylation of D-fructose 6-phosphate to fructose 1,6-bisphosphate by ATP, the first committing step of glycolysis. The chain is ATP-dependent 6-phosphofructokinase from Enterobacter cloacae.